We begin with the raw amino-acid sequence, 707 residues long: Polyribonucleotide nucleotidyltransferase (707 aa).

Residues Asp487 and Asp493 each coordinate Mg(2+). The KH domain occupies Pro554 to Ile613. One can recognise an S1 motif domain in the interval Gly623 to Lys691.

This sequence belongs to the polyribonucleotide nucleotidyltransferase family. Requires Mg(2+) as cofactor.

The protein localises to the cytoplasm. The catalysed reaction is RNA(n+1) + phosphate = RNA(n) + a ribonucleoside 5'-diphosphate. Involved in mRNA degradation. Catalyzes the phosphorolysis of single-stranded polyribonucleotides processively in the 3'- to 5'-direction. The polypeptide is Polyribonucleotide nucleotidyltransferase (Bacillus velezensis (strain DSM 23117 / BGSC 10A6 / LMG 26770 / FZB42) (Bacillus amyloliquefaciens subsp. plantarum)).